The chain runs to 65 residues: Large ribosomal subunit protein uL29 (65 aa).

Belongs to the universal ribosomal protein uL29 family.

The chain is Large ribosomal subunit protein uL29 from Acidithiobacillus ferrooxidans (strain ATCC 23270 / DSM 14882 / CIP 104768 / NCIMB 8455) (Ferrobacillus ferrooxidans (strain ATCC 23270)).